We begin with the raw amino-acid sequence, 152 residues long: SsrA-binding protein (152 aa).

Belongs to the SmpB family.

The protein resides in the cytoplasm. Functionally, required for rescue of stalled ribosomes mediated by trans-translation. Binds to transfer-messenger RNA (tmRNA), required for stable association of tmRNA with ribosomes. tmRNA and SmpB together mimic tRNA shape, replacing the anticodon stem-loop with SmpB. tmRNA is encoded by the ssrA gene; the 2 termini fold to resemble tRNA(Ala) and it encodes a 'tag peptide', a short internal open reading frame. During trans-translation Ala-aminoacylated tmRNA acts like a tRNA, entering the A-site of stalled ribosomes, displacing the stalled mRNA. The ribosome then switches to translate the ORF on the tmRNA; the nascent peptide is terminated with the 'tag peptide' encoded by the tmRNA and targeted for degradation. The ribosome is freed to recommence translation, which seems to be the essential function of trans-translation. The sequence is that of SsrA-binding protein from Helicobacter pylori (strain J99 / ATCC 700824) (Campylobacter pylori J99).